A 388-amino-acid polypeptide reads, in one-letter code: Envelope protein F13 homolog (388 aa).

Gly-2 carries the N-myristoyl glycine; by host lipid modification. One can recognise a PLD phosphodiesterase domain in the interval 310-337; the sequence is GDAINNTKLLVVDDEYVHVSNADIDGTH.

It localises to the virion membrane. The protein resides in the host endoplasmic reticulum membrane. Its function is as follows. Envelope protein associated with the inner side of the enveloped virion (EV) membrane. The sequence is that of Envelope protein F13 homolog (P43K) from Molluscum contagiosum virus subtype 2 (MOCV).